We begin with the raw amino-acid sequence, 365 residues long: Aspartate-semialdehyde dehydrogenase (365 aa).

NADP(+) contacts are provided by Thr-12, Gly-13, Ser-14, Val-15, Ser-37, Ser-40, Leu-85, and Asp-86. Catalysis depends on Cys-156, which acts as the Acyl-thioester intermediate. Residue Gly-188 participates in NADP(+) binding. His-256 (proton acceptor) is an active-site residue. Asn-343 serves as a coordination point for NADP(+).

This sequence belongs to the aspartate-semialdehyde dehydrogenase family. In terms of assembly, homotetramer; dimer of dimers.

The protein localises to the cytoplasm. It localises to the cytosol. Its subcellular location is the nucleus. It catalyses the reaction L-aspartate 4-semialdehyde + phosphate + NADP(+) = 4-phospho-L-aspartate + NADPH + H(+). Its pathway is amino-acid biosynthesis; L-methionine biosynthesis via de novo pathway; L-homoserine from L-aspartate: step 2/3. It participates in amino-acid biosynthesis; L-threonine biosynthesis; L-threonine from L-aspartate: step 2/5. Its activity is regulated as follows. Inhibited by the non-competitive inhibitors phthalaldehyde and naphthalene, the competitive inhibitor 1,4-benzoquinone and derivates such as 2-chloro-3-methoxy-1,4-naphthoquinone, 2,3-dichloro-1,4-naphthoquinone, 2-chloro-1,4-naphthoquinone, 2-bromo-1,4-naphthoquinone and 2,3-dichloro-5,8-dihydroxy-1,4-naphthoquinone, and 5-aminoisoquinoline. Inhibited by vinyl sulfones. Catalyzes the NADPH-dependent formation of L-aspartate 4-semialdehyde (L-ASA) by the reductive dephosphorylation of 4-phospho-L-aspartate. Mediates the second step in the biosynthesis of amino acids that derive from aspartate (the aspartate family of amino acids), including methioinine and threonine, the latter of which is a precursor to isoleucine. This Candida albicans (strain SC5314 / ATCC MYA-2876) (Yeast) protein is Aspartate-semialdehyde dehydrogenase.